A 188-amino-acid polypeptide reads, in one-letter code: dCTP deaminase, dUMP-forming (188 aa).

Residues 101–106 (KSSLGR), Asp119, 127–129 (TLE), Gln148, Tyr162, and Gln174 each bind dCTP. Glu129 serves as the catalytic Proton donor/acceptor.

Belongs to the dCTP deaminase family. As to quaternary structure, homotrimer.

The enzyme catalyses dCTP + 2 H2O = dUMP + NH4(+) + diphosphate. It participates in pyrimidine metabolism; dUMP biosynthesis; dUMP from dCTP: step 1/1. Bifunctional enzyme that catalyzes both the deamination of dCTP to dUTP and the hydrolysis of dUTP to dUMP without releasing the toxic dUTP intermediate. This Corynebacterium jeikeium (strain K411) protein is dCTP deaminase, dUMP-forming.